We begin with the raw amino-acid sequence, 301 residues long: 4-hydroxybenzoate octaprenyltransferase (301 aa).

Helical transmembrane passes span 34–54, 57–77, 108–128, 152–172, 176–196, 221–241, 245–265, and 279–299; these read IGSL…ADGL, LWTL…GCVI, LWVF…LNWL, LPQV…FAAV, VPLL…AYDT, FDLI…VLVG, DLGV…AYEF, and AFLH…VAVA.

This sequence belongs to the UbiA prenyltransferase family. The cofactor is Mg(2+).

It is found in the cell inner membrane. It carries out the reaction all-trans-octaprenyl diphosphate + 4-hydroxybenzoate = 4-hydroxy-3-(all-trans-octaprenyl)benzoate + diphosphate. Its pathway is cofactor biosynthesis; ubiquinone biosynthesis. Catalyzes the prenylation of para-hydroxybenzoate (PHB) with an all-trans polyprenyl group. Mediates the second step in the final reaction sequence of ubiquinone-8 (UQ-8) biosynthesis, which is the condensation of the polyisoprenoid side chain with PHB, generating the first membrane-bound Q intermediate 3-octaprenyl-4-hydroxybenzoate. This Xanthomonas euvesicatoria pv. vesicatoria (strain 85-10) (Xanthomonas campestris pv. vesicatoria) protein is 4-hydroxybenzoate octaprenyltransferase.